We begin with the raw amino-acid sequence, 380 residues long: Cytochrome b (380 aa).

Helical transmembrane passes span 34–54 (FGSL…LLAM), 78–99 (WLIR…YLHI), 114–134 (WNTG…GYVL), and 179–199 (FFAL…VHLT). Heme b is bound by residues His84 and His98. Heme b is bound by residues His183 and His197. His202 contributes to the a ubiquinone binding site. Transmembrane regions (helical) follow at residues 227–247 (LKDI…ALFS), 289–309 (LGGV…PFLH), 321–341 (LSQL…WVGS), and 348–368 (FIII…ILFP).

Belongs to the cytochrome b family. In terms of assembly, the cytochrome bc1 complex contains 11 subunits: 3 respiratory subunits (MT-CYB, CYC1 and UQCRFS1), 2 core proteins (UQCRC1 and UQCRC2) and 6 low-molecular weight proteins (UQCRH/QCR6, UQCRB/QCR7, UQCRQ/QCR8, UQCR10/QCR9, UQCR11/QCR10 and a cleavage product of UQCRFS1). This cytochrome bc1 complex then forms a dimer. It depends on heme b as a cofactor.

The protein localises to the mitochondrion inner membrane. In terms of biological role, component of the ubiquinol-cytochrome c reductase complex (complex III or cytochrome b-c1 complex) that is part of the mitochondrial respiratory chain. The b-c1 complex mediates electron transfer from ubiquinol to cytochrome c. Contributes to the generation of a proton gradient across the mitochondrial membrane that is then used for ATP synthesis. In Procellaria westlandica (Westland petrel), this protein is Cytochrome b (MT-CYB).